Consider the following 487-residue polypeptide: N-succinylglutamate 5-semialdehyde dehydrogenase (487 aa).

221–226 (GSSDTG) is an NAD(+) binding site. Residues glutamate 244 and cysteine 278 contribute to the active site.

The protein belongs to the aldehyde dehydrogenase family. AstD subfamily.

It catalyses the reaction N-succinyl-L-glutamate 5-semialdehyde + NAD(+) + H2O = N-succinyl-L-glutamate + NADH + 2 H(+). It functions in the pathway amino-acid degradation; L-arginine degradation via AST pathway; L-glutamate and succinate from L-arginine: step 4/5. Its function is as follows. Catalyzes the NAD-dependent reduction of succinylglutamate semialdehyde into succinylglutamate. This Burkholderia pseudomallei (strain 1106a) protein is N-succinylglutamate 5-semialdehyde dehydrogenase.